We begin with the raw amino-acid sequence, 729 residues long: Catalase-peroxidase (729 aa).

Residues 95 to 217 constitute a cross-link (tryptophyl-tyrosyl-methioninium (Trp-Tyr) (with M-243)); that stretch reads WHSAGTYRIT…LAAVQMGLIY (123 aa). H96 functions as the Proton acceptor in the catalytic mechanism. The tryptophyl-tyrosyl-methioninium (Tyr-Met) (with W-95) cross-link spans 217 to 243; it reads YVNPEGPNGKPDPIAAATDIRETFFRM. Position 258 (H258) interacts with heme b.

It belongs to the peroxidase family. Peroxidase/catalase subfamily. As to quaternary structure, homodimer or homotetramer. Heme b serves as cofactor. In terms of processing, formation of the three residue Trp-Tyr-Met cross-link is important for the catalase, but not the peroxidase activity of the enzyme.

It carries out the reaction H2O2 + AH2 = A + 2 H2O. The enzyme catalyses 2 H2O2 = O2 + 2 H2O. In terms of biological role, bifunctional enzyme with both catalase and broad-spectrum peroxidase activity. This chain is Catalase-peroxidase, found in Nitrobacter hamburgensis (strain DSM 10229 / NCIMB 13809 / X14).